The sequence spans 92 residues: UPF0728 protein (92 aa).

It belongs to the UPF0728 family.

This is UPF0728 protein from Branchiostoma floridae (Florida lancelet).